The chain runs to 60 residues: Large ribosomal subunit protein bL32 (60 aa).

The tract at residues 1–60 (MAVQQVKKSRSKRDMRRSHDSLTGPTLSTDKSTGELHLRHHVSPNGFYKGKKVVDTKSED) is disordered. A compositionally biased stretch (basic residues) spans 7-16 (KKSRSKRDMR).

The protein belongs to the bacterial ribosomal protein bL32 family.

This is Large ribosomal subunit protein bL32 from Francisella philomiragia subsp. philomiragia (strain ATCC 25017 / CCUG 19701 / FSC 153 / O#319-036).